A 302-amino-acid chain; its full sequence is MEVVVKDWGVSLGYSRGALVIKKRGGVDRIPLFQVDRIWILTGGVSISSRLVRALSHHFIDVVFFDAKGNPVARLFPPEANGTVTHRRAQYEAYLTGRGFELAKLVTYGKLINQARALRRLGQWKREHYGALAEAASKIADLAGRIPSCADVQCVLGHEGAAASLYWDAVSKTTGLPGRNPEAADPLNLALNYGYGVLKYAVWRQAVIHGLDPYAGYIHADKSGRPSLVLDLMEEFRPHVDLLVIRLRPSADWADGGVLKREIRAMLVEEWTGERLEPVIARQVGLAVAHLHGQRAYTPHQL.

3 residues coordinate Mn(2+): Glu-159, His-219, and Glu-234.

This sequence belongs to the CRISPR-associated endonuclease Cas1 family. As to quaternary structure, homodimer, forms a heterotetramer with a Cas2 homodimer. Mg(2+) is required as a cofactor. Mn(2+) serves as cofactor.

CRISPR (clustered regularly interspaced short palindromic repeat), is an adaptive immune system that provides protection against mobile genetic elements (viruses, transposable elements and conjugative plasmids). CRISPR clusters contain spacers, sequences complementary to antecedent mobile elements, and target invading nucleic acids. CRISPR clusters are transcribed and processed into CRISPR RNA (crRNA). Acts as a dsDNA endonuclease. Involved in the integration of spacer DNA into the CRISPR cassette. The sequence is that of CRISPR-associated endonuclease Cas1 1 from Pyrobaculum aerophilum (strain ATCC 51768 / DSM 7523 / JCM 9630 / CIP 104966 / NBRC 100827 / IM2).